The following is a 157-amino-acid chain: ATP synthase subunit b' (157 aa).

A helical membrane pass occupies residues 22–42 (ATLPIIAVQFLLLVAVLNSLF).

Belongs to the ATPase B chain family. F-type ATPases have 2 components, F(1) - the catalytic core - and F(0) - the membrane proton channel. F(1) has five subunits: alpha(3), beta(3), gamma(1), delta(1), epsilon(1). F(0) has four main subunits: a(1), b(1), b'(1) and c(10-14). The alpha and beta chains form an alternating ring which encloses part of the gamma chain. F(1) is attached to F(0) by a central stalk formed by the gamma and epsilon chains, while a peripheral stalk is formed by the delta, b and b' chains.

It localises to the cellular thylakoid membrane. In terms of biological role, f(1)F(0) ATP synthase produces ATP from ADP in the presence of a proton or sodium gradient. F-type ATPases consist of two structural domains, F(1) containing the extramembraneous catalytic core and F(0) containing the membrane proton channel, linked together by a central stalk and a peripheral stalk. During catalysis, ATP synthesis in the catalytic domain of F(1) is coupled via a rotary mechanism of the central stalk subunits to proton translocation. Its function is as follows. Component of the F(0) channel, it forms part of the peripheral stalk, linking F(1) to F(0). The b'-subunit is a diverged and duplicated form of b found in plants and photosynthetic bacteria. The polypeptide is ATP synthase subunit b' (Synechococcus sp. (strain JA-3-3Ab) (Cyanobacteria bacterium Yellowstone A-Prime)).